Here is a 303-residue protein sequence, read N- to C-terminus: Ribosomal protein L11 methyltransferase (303 aa).

Positions 144, 165, 187, and 235 each coordinate S-adenosyl-L-methionine.

This sequence belongs to the methyltransferase superfamily. PrmA family.

It localises to the cytoplasm. The catalysed reaction is L-lysyl-[protein] + 3 S-adenosyl-L-methionine = N(6),N(6),N(6)-trimethyl-L-lysyl-[protein] + 3 S-adenosyl-L-homocysteine + 3 H(+). Methylates ribosomal protein L11. This Prochlorococcus marinus (strain MIT 9312) protein is Ribosomal protein L11 methyltransferase.